The following is a 66-amino-acid chain: Surface composition regulator (66 aa).

Belongs to the GlgS family.

Functionally, major determinant of cell surface composition. Negatively regulates motility, adhesion and synthesis of biofilm exopolysaccharides. The chain is Surface composition regulator from Shigella flexneri.